We begin with the raw amino-acid sequence, 430 residues long: Glutamate-1-semialdehyde 2,1-aminomutase (430 aa).

Lys-269 carries the post-translational modification N6-(pyridoxal phosphate)lysine.

This sequence belongs to the class-III pyridoxal-phosphate-dependent aminotransferase family. HemL subfamily. Homodimer. Requires pyridoxal 5'-phosphate as cofactor.

It is found in the cytoplasm. The catalysed reaction is (S)-4-amino-5-oxopentanoate = 5-aminolevulinate. It functions in the pathway porphyrin-containing compound metabolism; protoporphyrin-IX biosynthesis; 5-aminolevulinate from L-glutamyl-tRNA(Glu): step 2/2. The sequence is that of Glutamate-1-semialdehyde 2,1-aminomutase from Desulfitobacterium hafniense (strain DSM 10664 / DCB-2).